Here is a 377-residue protein sequence, read N- to C-terminus: L-arabinitol 4-dehydrogenase (377 aa).

Zn(2+)-binding residues include Cys-66, His-91, Glu-92, Cys-121, Cys-124, Cys-127, Cys-135, and Glu-176. NAD(+) contacts are provided by residues Pro-203–Ile-204, Asp-224, Arg-229, Ile-296, and Gln-320–Arg-322.

It belongs to the zinc-containing alcohol dehydrogenase family. Homotetramer. Zn(2+) is required as a cofactor. Post-translationally, the N-terminus is blocked.

It catalyses the reaction L-arabinitol + NAD(+) = L-xylulose + NADH + H(+). It functions in the pathway carbohydrate degradation; L-arabinose degradation via L-arabinitol; D-xylulose 5-phosphate from L-arabinose (fungal route): step 2/5. Functionally, catalyzes the NAD-dependent oxidation of L-arabinitol to L-xylulose in the fungal L-arabinose catabolic pathway. L-arabinose catabolism is important for using plant material as a carbon source. Can partially compensate for xylitol dehydrogenase in xdh1 mutants. Also oxidizes galactitol to L-xylo-3-hexulose as an alternative to the standard Leloir pathway for D-galactose metabolism. NADP cannot act as a cosubstrate. In Hypocrea jecorina (Trichoderma reesei), this protein is L-arabinitol 4-dehydrogenase (lad1).